We begin with the raw amino-acid sequence, 318 residues long: L-lactate dehydrogenase (318 aa).

Residues Val-18, Asp-39, Lys-44, Tyr-69, and 83 to 84 each bind NAD(+); that span reads GA. Positions 86 and 92 each coordinate substrate. NAD(+)-binding positions include Ser-105, 122-124, and Ser-147; that span reads VSN. 124–127 serves as a coordination point for substrate; it reads NPVD. 152–155 serves as a coordination point for substrate; sequence DTSR. The Proton acceptor role is filled by His-179. Phosphotyrosine is present on Tyr-225. A substrate-binding site is contributed by Thr-234.

It belongs to the LDH/MDH superfamily. LDH family. As to quaternary structure, homotetramer.

It is found in the cytoplasm. The catalysed reaction is (S)-lactate + NAD(+) = pyruvate + NADH + H(+). Its pathway is fermentation; pyruvate fermentation to lactate; (S)-lactate from pyruvate: step 1/1. Catalyzes the conversion of lactate to pyruvate. The chain is L-lactate dehydrogenase from Clostridium botulinum (strain ATCC 19397 / Type A).